Reading from the N-terminus, the 562-residue chain is Phosphomethylpyrimidine synthase (562 aa).

Residues Asn179, Met208, Tyr237, His273, 293–295 (SRG), 334–337 (DGLR), and Glu373 contribute to the substrate site. His377 is a binding site for Zn(2+). Residue Tyr400 participates in substrate binding. His441 is a Zn(2+) binding site. Residues Cys521, Cys524, and Cys529 each coordinate [4Fe-4S] cluster.

It belongs to the ThiC family. Requires [4Fe-4S] cluster as cofactor.

It carries out the reaction 5-amino-1-(5-phospho-beta-D-ribosyl)imidazole + S-adenosyl-L-methionine = 4-amino-2-methyl-5-(phosphooxymethyl)pyrimidine + CO + 5'-deoxyadenosine + formate + L-methionine + 3 H(+). The protein operates within cofactor biosynthesis; thiamine diphosphate biosynthesis. Its function is as follows. Catalyzes the synthesis of the hydroxymethylpyrimidine phosphate (HMP-P) moiety of thiamine from aminoimidazole ribotide (AIR) in a radical S-adenosyl-L-methionine (SAM)-dependent reaction. The sequence is that of Phosphomethylpyrimidine synthase from Geobacillus kaustophilus (strain HTA426).